The sequence spans 313 residues: Meiotically up-regulated gene 100 protein, mitochondrial (313 aa).

Transmembrane regions (helical) follow at residues 147 to 167 and 178 to 198; these read VFDY…YTAG and SGFI…TLTF.

The protein resides in the mitochondrion inner membrane. Its function is as follows. Has a role in meiosis. This is Meiotically up-regulated gene 100 protein, mitochondrial (mug100) from Schizosaccharomyces pombe (strain 972 / ATCC 24843) (Fission yeast).